We begin with the raw amino-acid sequence, 200 residues long: Recombination protein RecR (200 aa).

A C4-type zinc finger spans residues 60 to 75 (CVYCQALTEDDVCNIC). Residues 83–177 (TKLCIIESML…KISRIGFGVP (95 aa)) form the Toprim domain.

The protein belongs to the RecR family.

Its function is as follows. May play a role in DNA repair. It seems to be involved in an RecBC-independent recombinational process of DNA repair. It may act with RecF and RecO. The chain is Recombination protein RecR from Francisella tularensis subsp. novicida (strain U112).